Reading from the N-terminus, the 106-residue chain is Putative membrane protein insertion efficiency factor (106 aa).

Belongs to the UPF0161 family.

It is found in the cell inner membrane. Functionally, could be involved in insertion of integral membrane proteins into the membrane. The polypeptide is Putative membrane protein insertion efficiency factor (Acinetobacter baumannii (strain AB307-0294)).